Reading from the N-terminus, the 118-residue chain is Large ribosomal subunit protein bL19 (118 aa).

The protein belongs to the bacterial ribosomal protein bL19 family.

In terms of biological role, this protein is located at the 30S-50S ribosomal subunit interface and may play a role in the structure and function of the aminoacyl-tRNA binding site. The protein is Large ribosomal subunit protein bL19 of Frankia casuarinae (strain DSM 45818 / CECT 9043 / HFP020203 / CcI3).